The sequence spans 152 residues: Deoxyuridine 5'-triphosphate nucleotidohydrolase (152 aa).

Substrate is bound by residues 72–74, Asn85, and 89–91; these read RSG and TID.

Belongs to the dUTPase family. Requires Mg(2+) as cofactor.

The enzyme catalyses dUTP + H2O = dUMP + diphosphate + H(+). It participates in pyrimidine metabolism; dUMP biosynthesis; dUMP from dCTP (dUTP route): step 2/2. This enzyme is involved in nucleotide metabolism: it produces dUMP, the immediate precursor of thymidine nucleotides and it decreases the intracellular concentration of dUTP so that uracil cannot be incorporated into DNA. The polypeptide is Deoxyuridine 5'-triphosphate nucleotidohydrolase (Rhodopseudomonas palustris (strain HaA2)).